The chain runs to 345 residues: Major capsid protein (345 aa).

2 intercapsomeric interactions regions span residues 11-25 (GTNQ…GDKL) and 152-156 (YNENI).

The protein belongs to the T7virus major capsid protein family. Homohexamer. Interacts with the connector protein and the minor capsid protein. Interacts with the capsid assembly scaffolding protein; capsid proteins and scaffolding proteins form building blocks that assemble to form the procapsid, each hexamer of the major capsid protein interacting with 2 scaffolding proteins.

It is found in the virion. In terms of biological role, assembles with the minor capsid protein to form an icosahedral capsid with a T=7 symmetry, about 60 nm in diameter, and consisting of 415 capsid proteins. The major and minor capsid proteins are incorporated into the capsid in about a 90/10 ratio respectively. Once the capsid is formed, encapsidates one single copy of the viral genome. This is Major capsid protein from Escherichia coli (Bacteriophage T7).